A 314-amino-acid chain; its full sequence is Probable carboxylesterase 2 (314 aa).

An Involved in the stabilization of the negatively charged intermediate by the formation of the oxyanion hole motif is present at residues 79–81 (HGG). Catalysis depends on residues Ser-158, Asp-254, and His-286.

The protein belongs to the 'GDXG' lipolytic enzyme family. In terms of tissue distribution, expressed in roots and flowers.

The catalysed reaction is a carboxylic ester + H2O = an alcohol + a carboxylate + H(+). In terms of biological role, carboxylesterase acting on esters with varying acyl chain length. The protein is Probable carboxylesterase 2 (CXE2) of Arabidopsis thaliana (Mouse-ear cress).